We begin with the raw amino-acid sequence, 304 residues long: Sulfate adenylyltransferase subunit 2 2 (304 aa).

It belongs to the PAPS reductase family. CysD subfamily. As to quaternary structure, heterodimer composed of CysD, the smaller subunit, and CysN.

It catalyses the reaction sulfate + ATP + H(+) = adenosine 5'-phosphosulfate + diphosphate. It participates in sulfur metabolism; hydrogen sulfide biosynthesis; sulfite from sulfate: step 1/3. In terms of biological role, with CysN forms the ATP sulfurylase (ATPS) that catalyzes the adenylation of sulfate producing adenosine 5'-phosphosulfate (APS) and diphosphate, the first enzymatic step in sulfur assimilation pathway. APS synthesis involves the formation of a high-energy phosphoric-sulfuric acid anhydride bond driven by GTP hydrolysis by CysN coupled to ATP hydrolysis by CysD. The protein is Sulfate adenylyltransferase subunit 2 2 of Marinobacter nauticus (strain ATCC 700491 / DSM 11845 / VT8) (Marinobacter aquaeolei).